The following is a 521-amino-acid chain: Sodium/hydrogen exchanger 5 (521 aa).

Residues 1 to 23 are Cytoplasmic-facing; sequence MEEVMISPVEHDPQGQVKQQQAA. The chain crosses the membrane as a helical span at residues 24–44; that stretch reads GVGILLQIMMLVLSFVLGHVL. The Lumenal segment spans residues 45 to 48; the sequence is RRHR. Residues 49 to 69 form a helical membrane-spanning segment; the sequence is FHYLPEASGSLLIGLIVGILA. Residues 70 to 86 lie on the Cytoplasmic side of the membrane; sequence NISDTETSIRTWFNFHE. An intramembrane region (helical) is located at residues 87–107; it reads EFFFLFLLPPIIFQSGFSLQP. Residues 108-115 lie on the Cytoplasmic side of the membrane; that stretch reads KPFFSNFG. The helical transmembrane segment at 116–136 threads the bilayer; it reads AIVTFAIIGTFVASVVTGGLV. Over 137-141 the chain is Lumenal; the sequence is YLGGS. 2 consecutive intramembrane regions (helical) follow at residues 142–162 and 166–186; these read MYLMYKLPFVECLMFGALISA and VTVLSIFQDVGTDVNLYALVF. Topologically, residues 187 to 222 are lumenal; the sequence is GESVLNDAMAISLYRTMSLVNRQSSSGEHFFMVVIR. Residues 223 to 243 form a helical membrane-spanning segment; the sequence is FFETFAGSMSAGVGVGFTSAL. The Cytoplasmic portion of the chain corresponds to 244-271; that stretch reads LFKYAGLDTENLQNLECCLFVLFPYFSY. A helical transmembrane segment spans residues 272-292; it reads MLAEGVGLSGIVSILFTGIVM. Residues 293–310 lie on the Lumenal side of the membrane; the sequence is KRYTFSNLSEASQSFVSS. An N-linked (GlcNAc...) asparagine glycan is attached at N299. A helical membrane pass occupies residues 311 to 331; sequence FFHLISSLAETFTFIYMGFDI. At 332-340 the chain is on the cytoplasmic side; that stretch reads AMEQHSWSH. A helical membrane pass occupies residues 341–361; the sequence is VGFILFSILFIGVARAVNVFG. Over 362–382 the chain is Lumenal; sequence CAYLVNLFRQENQKIPMKHQK. A helical transmembrane segment spans residues 383 to 402; it reads ALWYSGLRGAMAFALALQSL. At 403 to 411 the chain is on the cytoplasmic side; sequence HDLPEGHGQ. Residues 412–432 form a helical membrane-spanning segment; sequence IIFTATTTIVVVTVLLIGGST. At 433-521 the chain is on the lumenal side; sequence GKMLEALEVV…NSGDGDGDGE (89 aa). A disordered region spans residues 453-480; it reads GFEESDHQYVPPPFSIGASSDEDTSSSG. Positions 467–480 are enriched in low complexity; sequence SIGASSDEDTSSSG.

Belongs to the monovalent cation:proton antiporter 1 (CPA1) transporter (TC 2.A.36) family. As to expression, expressed in roots, leaves, stems, flowers and siliques. Detected at low levels in roots and shoots.

It is found in the endosome membrane. The protein resides in the golgi apparatus. Its subcellular location is the trans-Golgi network membrane. It localises to the golgi stack membrane. It catalyses the reaction Na(+)(in) + H(+)(out) = Na(+)(out) + H(+)(in). The catalysed reaction is K(+)(in) + H(+)(out) = K(+)(out) + H(+)(in). Its function is as follows. Involved in trafficking to the vacuole. Required for cell proliferation and cell expansion, but not for cell differentiation. Acts in low affinity electroneutral exchange of protons for cations such as Na(+) or K(+) across membranes. May also exchange Li(+) and Cs(+) with a lower affinity. The chain is Sodium/hydrogen exchanger 5 (NHX5) from Arabidopsis thaliana (Mouse-ear cress).